The sequence spans 319 residues: Annexin A4 (319 aa).

Residue Thr-7 is modified to Phosphothreonine. Ser-12 carries the phosphoserine modification. Annexin repeat units follow at residues 14 to 85 (FNAT…GMMT), 86 to 157 (PTVL…SLTA), 169 to 241 (ALVR…AIVK), and 245 to 316 (NKPA…ILCG). Lys-213, Lys-293, and Lys-300 each carry N6-acetyllysine.

It belongs to the annexin family.

The protein resides in the zymogen granule membrane. In terms of biological role, calcium/phospholipid-binding protein which promotes membrane fusion and is involved in exocytosis. The chain is Annexin A4 (Anxa4) from Rattus norvegicus (Rat).